A 488-amino-acid polypeptide reads, in one-letter code: Beta-1,3-glucan-binding protein (488 aa).

An N-terminal signal peptide occupies residues 1–17 (MFVTFICFLACLTCSYG). The interval 18-135 (QPRAQQYVVP…GTPADTSLEP (118 aa)) is binds to curdlan, laminarihexaose and laminarin. The complex formation with laminarin induces self-association of the complexes into a macro structure, likely containing six protein and three laminarin molecules. The macro structures may form a platform on a microbial surface for recruitment of downstream proteases, as a means of amplification of the initial signal of pathogen recognition for the activation of the phenoloxidase cascade. Positions 18–198 (QPRAQQYVVP…LKDLANWEAE (181 aa)) are binds to curdlan, lipopolysaccharide and lipoteichoic acid, activates the phenoloxidase cascade and is resistant to proteolytic degradation by trypsin or chymotrypsin, but is not as effective as the full-length protein in aggregation of microorganisms. The CBM39 domain occupies 24-123 (YVVPSAKLEA…GEWTVTEFVN (100 aa)). Residues 24 to 127 (YVVPSAKLEA…VTEFVNEDGT (104 aa)) form a binds to laminarihexaose and laminarin region. Residues Asp72, 99-101 (WTY), and Arg110 each bind substrate. The disordered stretch occupies residues 125 to 158 (DGTPADTSLEPTTAPTPVRPDQPNQPIPTHRPDP). The span at 129–139 (ADTSLEPTTAP) shows a compositional bias: polar residues. The span at 141-150 (PVRPDQPNQP) shows a compositional bias: pro residues. A GH16 domain is found at 144–488 (PDQPNQPIPT…KVDYVRVYAL (345 aa)). The interval 199-488 (VKFPEEPDYP…KVDYVRVYAL (290 aa)) is binds to laminarin, but not to curdlan, does not activate the phenoloxidase cascade, is susceptible to proteinase digestion by trypsin or chymotrypsin and does not cause aggregation of microorganisms. 2 N-linked (GlcNAc...) asparagine glycosylation sites follow: Asn373 and Asn453.

Belongs to the insect beta-1,3-glucan binding protein family. In terms of assembly, monomer. In terms of processing, the N-terminus is blocked. Fat body and hemolymph.

It localises to the secreted. In terms of biological role, involved in the recognition of invading microorganisms causing their aggregation. Activates the phenoloxidase cascade. Binds specifically to beta-1,3-glucan. Binds to curdlan, a linear water-insoluble beta-1,3-glucan polysaccharide, and to laminarin, a water-soluble beta-1,3-glucan polysaccharide containing beta-1,6 branches. Also binds to lipopolysaccharide and lipoteichoic acid. The chain is Beta-1,3-glucan-binding protein from Plodia interpunctella (Indianmeal moth).